Reading from the N-terminus, the 346-residue chain is UDP-N-acetylenolpyruvoylglucosamine reductase (346 aa).

Residues 18 to 189 (LRAQARAFIA…VSVVFALKTH (172 aa)) form the FAD-binding PCMH-type domain. Arg165 is an active-site residue. The Proton donor role is filled by Ser240. Glu336 is an active-site residue.

The protein belongs to the MurB family. The cofactor is FAD.

It is found in the cytoplasm. It carries out the reaction UDP-N-acetyl-alpha-D-muramate + NADP(+) = UDP-N-acetyl-3-O-(1-carboxyvinyl)-alpha-D-glucosamine + NADPH + H(+). Its pathway is cell wall biogenesis; peptidoglycan biosynthesis. Cell wall formation. This is UDP-N-acetylenolpyruvoylglucosamine reductase from Neisseria meningitidis serogroup A / serotype 4A (strain DSM 15465 / Z2491).